The following is a 431-amino-acid chain: Adenylosuccinate synthetase (431 aa).

GTP contacts are provided by residues 13-19 and 41-43; these read GDEGKGK and GHT. The Proton acceptor role is filled by Asp-14. Mg(2+) contacts are provided by Asp-14 and Gly-41. Residues 14 to 17, 39 to 42, Thr-130, Arg-144, Gln-225, Thr-240, and Arg-304 each bind IMP; these read DEGK and NAGH. Residue His-42 is the Proton donor of the active site. 300–306 is a substrate binding site; the sequence is AVTGRPR. GTP-binding positions include Arg-306, 332–334, and 415–417; these read KLD and STG.

The protein belongs to the adenylosuccinate synthetase family. Homodimer. It depends on Mg(2+) as a cofactor.

The protein resides in the cytoplasm. It catalyses the reaction IMP + L-aspartate + GTP = N(6)-(1,2-dicarboxyethyl)-AMP + GDP + phosphate + 2 H(+). The protein operates within purine metabolism; AMP biosynthesis via de novo pathway; AMP from IMP: step 1/2. In terms of biological role, plays an important role in the de novo pathway of purine nucleotide biosynthesis. Catalyzes the first committed step in the biosynthesis of AMP from IMP. This is Adenylosuccinate synthetase from Legionella pneumophila (strain Lens).